The following is a 254-amino-acid chain: Triosephosphate isomerase (254 aa).

12-14 contributes to the substrate binding site; that stretch reads NWK. Histidine 99 serves as the catalytic Electrophile. The Proton acceptor role is filled by glutamate 169. Substrate is bound by residues glycine 175, serine 214, and 235–236; that span reads GG.

The protein belongs to the triosephosphate isomerase family. As to quaternary structure, homodimer.

The protein localises to the cytoplasm. The enzyme catalyses D-glyceraldehyde 3-phosphate = dihydroxyacetone phosphate. Its pathway is carbohydrate biosynthesis; gluconeogenesis. The protein operates within carbohydrate degradation; glycolysis; D-glyceraldehyde 3-phosphate from glycerone phosphate: step 1/1. Involved in the gluconeogenesis. Catalyzes stereospecifically the conversion of dihydroxyacetone phosphate (DHAP) to D-glyceraldehyde-3-phosphate (G3P). The chain is Triosephosphate isomerase from Bartonella henselae (strain ATCC 49882 / DSM 28221 / CCUG 30454 / Houston 1) (Rochalimaea henselae).